Here is a 440-residue protein sequence, read N- to C-terminus: Adenosylhomocysteinase (440 aa).

Positions 64, 139, and 164 each coordinate substrate. 165–167 (TTT) is a binding site for NAD(+). Substrate contacts are provided by lysine 194 and aspartate 198. NAD(+) contacts are provided by residues asparagine 199, 228 to 233 (GFGDVG), glutamate 251, asparagine 286, 307 to 309 (IGH), and asparagine 352.

The protein belongs to the adenosylhomocysteinase family. NAD(+) is required as a cofactor.

It localises to the cytoplasm. It catalyses the reaction S-adenosyl-L-homocysteine + H2O = L-homocysteine + adenosine. Its pathway is amino-acid biosynthesis; L-homocysteine biosynthesis; L-homocysteine from S-adenosyl-L-homocysteine: step 1/1. Its function is as follows. May play a key role in the regulation of the intracellular concentration of adenosylhomocysteine. The sequence is that of Adenosylhomocysteinase from Granulibacter bethesdensis (strain ATCC BAA-1260 / CGDNIH1).